Here is a 288-residue protein sequence, read N- to C-terminus: Pyridoxal kinase PdxY (288 aa).

Substrate contacts are provided by residues Ser9 and 44-45; that span reads TQ. Residues Asp111, Glu148, and Lys181 each contribute to the ATP site. Asp224 serves as a coordination point for substrate.

The protein belongs to the pyridoxine kinase family. PdxY subfamily. As to quaternary structure, homodimer. The cofactor is Mg(2+).

It catalyses the reaction pyridoxal + ATP = pyridoxal 5'-phosphate + ADP + H(+). The protein operates within cofactor metabolism; pyridoxal 5'-phosphate salvage; pyridoxal 5'-phosphate from pyridoxal: step 1/1. In terms of biological role, pyridoxal kinase involved in the salvage pathway of pyridoxal 5'-phosphate (PLP). Catalyzes the phosphorylation of pyridoxal to PLP. The protein is Pyridoxal kinase PdxY of Haemophilus influenzae (strain ATCC 51907 / DSM 11121 / KW20 / Rd).